We begin with the raw amino-acid sequence, 208 residues long: N-(5'-phosphoribosyl)anthranilate isomerase (208 aa).

Belongs to the TrpF family.

The catalysed reaction is N-(5-phospho-beta-D-ribosyl)anthranilate = 1-(2-carboxyphenylamino)-1-deoxy-D-ribulose 5-phosphate. It functions in the pathway amino-acid biosynthesis; L-tryptophan biosynthesis; L-tryptophan from chorismate: step 3/5. The protein is N-(5'-phosphoribosyl)anthranilate isomerase of Nitrosospira multiformis (strain ATCC 25196 / NCIMB 11849 / C 71).